Here is a 305-residue protein sequence, read N- to C-terminus: Ribosomal RNA small subunit methyltransferase H (305 aa).

Residues 30 to 32, D49, F74, D96, and Q103 contribute to the S-adenosyl-L-methionine site; that span reads GGH.

Belongs to the methyltransferase superfamily. RsmH family.

Its subcellular location is the cytoplasm. The catalysed reaction is cytidine(1402) in 16S rRNA + S-adenosyl-L-methionine = N(4)-methylcytidine(1402) in 16S rRNA + S-adenosyl-L-homocysteine + H(+). Specifically methylates the N4 position of cytidine in position 1402 (C1402) of 16S rRNA. The sequence is that of Ribosomal RNA small subunit methyltransferase H from Francisella tularensis subsp. tularensis (strain FSC 198).